The primary structure comprises 498 residues: Lysine--tRNA ligase (498 aa).

Mg(2+) contacts are provided by Glu-409 and Glu-416.

It belongs to the class-II aminoacyl-tRNA synthetase family. Homodimer. Mg(2+) serves as cofactor.

The protein localises to the cytoplasm. The catalysed reaction is tRNA(Lys) + L-lysine + ATP = L-lysyl-tRNA(Lys) + AMP + diphosphate. This Teredinibacter turnerae (strain ATCC 39867 / T7901) protein is Lysine--tRNA ligase.